The sequence spans 206 residues: N-(5'-phosphoribosyl)anthranilate isomerase (206 aa).

The protein belongs to the TrpF family.

The enzyme catalyses N-(5-phospho-beta-D-ribosyl)anthranilate = 1-(2-carboxyphenylamino)-1-deoxy-D-ribulose 5-phosphate. The protein operates within amino-acid biosynthesis; L-tryptophan biosynthesis; L-tryptophan from chorismate: step 3/5. This chain is N-(5'-phosphoribosyl)anthranilate isomerase, found in Nitrosococcus oceani (strain ATCC 19707 / BCRC 17464 / JCM 30415 / NCIMB 11848 / C-107).